A 335-amino-acid chain; its full sequence is Ubiquinone biosynthesis protein COQ4, mitochondrial (335 aa).

Residues 1-10 (MLRLSLLRST) constitute a mitochondrion transit peptide. Residues histidine 210, aspartate 211, histidine 214, and glutamate 226 each contribute to the Zn(2+) site.

Belongs to the COQ4 family. As to quaternary structure, component of a multi-subunit COQ enzyme complex, composed of at least COQ3, COQ4, COQ5, COQ6, COQ7 and COQ9. Interacts with COQ3. Requires Zn(2+) as cofactor.

It is found in the mitochondrion inner membrane. The catalysed reaction is 4-hydroxy-3-methoxy-5-(all-trans-hexaprenyl)benzoate + H(+) = 2-methoxy-6-(all-trans-hexaprenyl)phenol + CO2. The protein operates within cofactor biosynthesis; ubiquinone biosynthesis. Functionally, lyase that catalyzes the C1-decarboxylation of 4-hydroxy-3-methoxy-5-(all-trans-hexaprenyl)benzoic acid into 2-methoxy-6-(all-trans-hexaprenyl)phenol during ubiquinone biosynthesis. May play a role in organizing a multi-subunit COQ enzyme complex required for coenzyme Q biosynthesis. Required for steady-state levels of COQ3, COQ4, COQ6, COQ7 and COQ9 polypeptides. This is Ubiquinone biosynthesis protein COQ4, mitochondrial from Saccharomyces cerevisiae (strain ATCC 204508 / S288c) (Baker's yeast).